We begin with the raw amino-acid sequence, 290 residues long: Undecaprenyl-diphosphatase 2 (290 aa).

6 consecutive transmembrane segments (helical) span residues 104 to 124, 128 to 148, 174 to 194, 205 to 225, 237 to 257, and 268 to 288; these read WMVIVGTLPVAVLGYLGKDLI, LRNLWITATMLVLFSFVFILA, CLALIPGVSRSGGTVSAGLFL, SFLLAIPAVLASGLFSLPDAF, QLFVGTAIAFAVGYASIAWLL, and FALWRIPLGLAVMGLLAFGVL.

It belongs to the UppP family.

The protein resides in the cell membrane. It catalyses the reaction di-trans,octa-cis-undecaprenyl diphosphate + H2O = di-trans,octa-cis-undecaprenyl phosphate + phosphate + H(+). Functionally, catalyzes the dephosphorylation of undecaprenyl diphosphate (UPP). Confers resistance to bacitracin. In Corynebacterium jeikeium (strain K411), this protein is Undecaprenyl-diphosphatase 2.